Consider the following 199-residue polypeptide: Ribonuclease HII (199 aa).

An RNase H type-2 domain is found at 9–198 (QFVAGVDEVG…VRAAIEQMNL (190 aa)). A divalent metal cation contacts are provided by D15, E16, and D107.

It belongs to the RNase HII family. Requires Mn(2+) as cofactor. Mg(2+) serves as cofactor.

It is found in the cytoplasm. It carries out the reaction Endonucleolytic cleavage to 5'-phosphomonoester.. In terms of biological role, endonuclease that specifically degrades the RNA of RNA-DNA hybrids. This is Ribonuclease HII from Saccharophagus degradans (strain 2-40 / ATCC 43961 / DSM 17024).